The sequence spans 379 residues: UDP-N-acetylglucosamine--N-acetylmuramyl-(pentapeptide) pyrophosphoryl-undecaprenol N-acetylglucosamine transferase (379 aa).

Residues T13 to G15, N123, R166, S194, and Q295 contribute to the UDP-N-acetyl-alpha-D-glucosamine site.

The protein belongs to the glycosyltransferase 28 family. MurG subfamily.

The protein resides in the cell inner membrane. It carries out the reaction di-trans,octa-cis-undecaprenyl diphospho-N-acetyl-alpha-D-muramoyl-L-alanyl-D-glutamyl-meso-2,6-diaminopimeloyl-D-alanyl-D-alanine + UDP-N-acetyl-alpha-D-glucosamine = di-trans,octa-cis-undecaprenyl diphospho-[N-acetyl-alpha-D-glucosaminyl-(1-&gt;4)]-N-acetyl-alpha-D-muramoyl-L-alanyl-D-glutamyl-meso-2,6-diaminopimeloyl-D-alanyl-D-alanine + UDP + H(+). The protein operates within cell wall biogenesis; peptidoglycan biosynthesis. Its function is as follows. Cell wall formation. Catalyzes the transfer of a GlcNAc subunit on undecaprenyl-pyrophosphoryl-MurNAc-pentapeptide (lipid intermediate I) to form undecaprenyl-pyrophosphoryl-MurNAc-(pentapeptide)GlcNAc (lipid intermediate II). This chain is UDP-N-acetylglucosamine--N-acetylmuramyl-(pentapeptide) pyrophosphoryl-undecaprenol N-acetylglucosamine transferase, found in Rhodospirillum centenum (strain ATCC 51521 / SW).